The primary structure comprises 309 residues: MGNKIRTTVLLAAMTALMMIIGQMLGGRQGMMIALIFAGVMNFASYWYSDKIVLKMYQAREITPESAHGLYAIVQRLVQRANLPMPRIFIIPQDTPNAFATGRNPDHAVVAVTEGLLNLLDEQEITGVLAHELAHVKNRDILIGTIAATMAGAIMMLASMARWGAIFGGTRSSDDEGGSSVIGLIALSIIAPMAAMVIQMAISRSREYLADATGAAISGNPEGLASALEKLGTYSKQIPMRANPSTAHIFTVSPLSGTTLMNLFSTHPPLESRIARLRHGSDSGTGNRDSSIRRRNMNTEAKAAWDRLR.

The next 2 helical transmembrane spans lie at 7–27 and 29–49; these read TTVLLAAMTALMMIIGQMLGG and QGMMIALIFAGVMNFASYWYS. A Zn(2+)-binding site is contributed by His131. Glu132 is a catalytic residue. His135 contacts Zn(2+). 2 helical membrane-spanning segments follow: residues 141–161 and 182–202; these read ILIGTIAATMAGAIMMLASMA and IGLIALSIIAPMAAMVIQMAI. Zn(2+) is bound at residue Glu207. A disordered region spans residues 278-309; that stretch reads RHGSDSGTGNRDSSIRRRNMNTEAKAAWDRLR.

It belongs to the peptidase M48B family. Zn(2+) is required as a cofactor.

It is found in the cell inner membrane. In Desulforapulum autotrophicum (strain ATCC 43914 / DSM 3382 / VKM B-1955 / HRM2) (Desulfobacterium autotrophicum), this protein is Protease HtpX homolog.